The following is a 254-amino-acid chain: Probable 2,4-dienoyl-CoA reductase [(2E)-enoyl-CoA-producing] (254 aa).

NADP(+) is bound at residue 6 to 38 (VIITGGSSGMGKAMAKKQAELGWHVMVTGRNHE). Thr-100 serves as a coordination point for substrate. The active-site Proton acceptor is Tyr-142. Residue Lys-157 coordinates NAD(+).

It belongs to the short-chain dehydrogenases/reductases (SDR) family. 2,4-dienoyl-CoA reductase subfamily.

It catalyses the reaction a 4,5-saturated-(2E)-enoyl-CoA + NADP(+) = a (2E,4E)-dienoyl-CoA + NADPH + H(+). It carries out the reaction a (2E,4Z)-dienoyl-CoA + NADPH + H(+) = a 4,5-saturated-(2E)-enoyl-CoA + NADP(+). It functions in the pathway lipid metabolism; fatty acid beta-oxidation. Functionally, auxiliary enzyme of beta-oxidation. It participates in the metabolism of unsaturated fatty enoyl-CoA esters having double bonds in both even- and odd-numbered positions. Catalyzes the NADP-dependent reduction of 2,4-dienoyl-CoA to yield trans-3-enoyl-CoA. The protein is Probable 2,4-dienoyl-CoA reductase [(2E)-enoyl-CoA-producing] (fadH) of Bacillus subtilis (strain 168).